The chain runs to 456 residues: DnaJ homolog dnj-10 (456 aa).

Residues 44–108 (DYYKTLGVDK…TKRQEYDAYG (65 aa)) enclose the J domain. The CR-type zinc-finger motif lies at 178–257 (GATKNVSVNV…CEGEGQTVQR (80 aa)). CXXCXGXG motif repeat units lie at residues 208–215 (CPYCNGTG), 231–238 (CNRCRGSG), and 245–252 (CQECEGEG). A compositionally biased stretch (basic and acidic residues) spans 395–429 (KGLEKNQKTEEKETKKNEEKKSEGASESQKRRSEP). The segment at 395–443 (KGLEKNQKTEEKETKKNEEKKSEGASESQKRRSEPVAENAETIDENQEN) is disordered.

The protein is DnaJ homolog dnj-10 (dnj-10) of Caenorhabditis elegans.